The chain runs to 141 residues: Hemoglobin subunit alpha (141 aa).

Positions 1–141 (VLSPADKTNV…VSTVLTSKYR (141 aa)) constitute a Globin domain. Phosphoserine is present on Ser-3. At Lys-7 the chain carries N6-succinyllysine. Thr-8 is subject to Phosphothreonine. An N6-succinyllysine modification is found at Lys-11. Lys-16 carries the post-translational modification N6-acetyllysine; alternate. Lys-16 bears the N6-succinyllysine; alternate mark. Position 24 is a phosphotyrosine (Tyr-24). The residue at position 35 (Ser-35) is a Phosphoserine. Lys-40 carries the post-translational modification N6-succinyllysine. Ser-49 is subject to Phosphoserine. An O2-binding site is contributed by His-58. His-87 provides a ligand contact to heme b. Ser-102 bears the Phosphoserine mark. Thr-108 carries the post-translational modification Phosphothreonine. The residue at position 124 (Ser-124) is a Phosphoserine. Residues Thr-134 and Thr-137 each carry the phosphothreonine modification. Ser-138 carries the phosphoserine modification.

This sequence belongs to the globin family. In terms of assembly, heterotetramer of two alpha chains and two beta chains. Red blood cells.

In terms of biological role, involved in oxygen transport from the lung to the various peripheral tissues. Functionally, hemopressin acts as an antagonist peptide of the cannabinoid receptor CNR1. Hemopressin-binding efficiently blocks cannabinoid receptor CNR1 and subsequent signaling. The polypeptide is Hemoglobin subunit alpha (HBA) (Martes foina (Beech marten)).